The following is a 427-amino-acid chain: U1 small nuclear ribonucleoprotein 70 kDa (427 aa).

Disordered regions lie at residues 82 to 102 and 215 to 427; these read EPGDPEYAPPKPEVELPSQKR and RGRT…EYVR. A compositionally biased stretch (basic and acidic residues) spans 93-102; sequence PEVELPSQKR. The region spanning 138–216 is the RRM domain; sequence KTLFVSRLNY…RRVLVDVERG (79 aa). Over residues 227 to 241 the composition is skewed to gly residues; that stretch reads LGGGLGTSRVGGGEE. Composition is skewed to basic and acidic residues over residues 257-402 and 409-427; these read EPSR…RYDK and RYEREYKRSKRSESREYVR. A Phosphoserine modification is found at Ser282.

In terms of assembly, component of the spliceosome. Interacts with CYP63, U2AF35A, U2AF35B, SRZ21, RSZ22, SR34, SR45, SR45A and SCL33. Post-translationally, phosphorylated. The association and dissociation with SR45 is not affected by the phosphorylation status. Ubiquitous.

Its subcellular location is the nucleus speckle. It is found in the nucleus. The protein localises to the nucleoplasm. Mediates the splicing of pre-mRNA by binding to the loop I region of U1-snRNA. This Arabidopsis thaliana (Mouse-ear cress) protein is U1 small nuclear ribonucleoprotein 70 kDa (RNU1).